The sequence spans 254 residues: tRNA (guanine-N(1)-)-methyltransferase (254 aa).

Residues glycine 115 and 135–140 (VGDFVL) contribute to the S-adenosyl-L-methionine site.

Belongs to the RNA methyltransferase TrmD family. Homodimer.

The protein resides in the cytoplasm. The catalysed reaction is guanosine(37) in tRNA + S-adenosyl-L-methionine = N(1)-methylguanosine(37) in tRNA + S-adenosyl-L-homocysteine + H(+). In terms of biological role, specifically methylates guanosine-37 in various tRNAs. This Francisella tularensis subsp. tularensis (strain FSC 198) protein is tRNA (guanine-N(1)-)-methyltransferase.